Consider the following 86-residue polypeptide: Toxin Td1 (86 aa).

Residues 1–20 (MIRFILFISCFFLIGMVIEC) form the signal peptide. The LCN-type CS-alpha/beta domain occupies 21–83 (KDGYLMEPNG…VWERATNRCG (63 aa)). 4 disulfide bridges follow: C31/C82, C35/C57, C43/C63, and C47/C65. Position 84 is a lysine amide (K84).

As to expression, expressed by the venom gland.

The protein localises to the secreted. Functionally, beta toxins bind voltage-independently at site-4 of sodium channels (Nav) and shift the voltage of activation toward more negative potentials thereby affecting sodium channel activation and promoting spontaneous and repetitive firing. The polypeptide is Toxin Td1 (Tityus discrepans (Venezuelan scorpion)).